A 30-amino-acid chain; its full sequence is Serum amyloid P-component (30 aa).

Residues 1–30 form the Pentraxin (PTX) domain; it reads APQDLSGKMFIFPQETSTANVXLTARSQDF.

The protein belongs to the pentraxin family. As to quaternary structure, homopentamer. Discoid arrangement of 5 covalently bound subunits. Ca(2+) is required as a cofactor.

Its subcellular location is the secreted. In Anarhichas lupus (Atlantic wolffish), this protein is Serum amyloid P-component.